The following is a 423-amino-acid chain: Glycine amidinotransferase, mitochondrial (423 aa).

The transit peptide at 1-43 (MLRVRCLRGGSRGAEAVHYIGSRLGGSLTGWVQRTFQSTQAAT) directs the protein to the mitochondrion. Residues S46 and S49 each carry the phosphoserine modification. Position 170 (D170) interacts with arginine. Catalysis depends on residues D254 and H303. Residues D305, R322, S354, and S355 each contribute to the arginine site. An N6-acetyllysine modification is found at K385. C407 functions as the Amidino-cysteine intermediate in the catalytic mechanism.

This sequence belongs to the amidinotransferase family. In terms of assembly, homodimer. As to expression, expressed in kidney, brain, gonads, uterus, and embryonic head, chest and abdomen. Maternally expressed in the placenta and yolk sac of embryos.

It localises to the mitochondrion inner membrane. It carries out the reaction L-arginine + glycine = guanidinoacetate + L-ornithine. It catalyses the reaction 4-aminobutanoate + L-arginine = 4-guanidinobutanoate + L-ornithine. The enzyme catalyses beta-alanine + L-arginine = 3-guanidinopropanoate + L-ornithine. The catalysed reaction is taurine + L-arginine = taurocyamine + L-ornithine. The protein operates within amine and polyamine biosynthesis; creatine biosynthesis; creatine from L-arginine and glycine: step 1/2. In terms of biological role, transamidinase that catalyzes the transfer of the amidino group of L-arginine onto the amino moiety of acceptor metabolites such as glycine, beta-alanine, gamma-aminobutyric acid (GABA) and taurine yielding the corresponding guanidine derivatives. Catalyzes the rate-limiting step of creatine biosynthesis, namely the transfer of the amidino group from L-arginine to glycine to generate guanidinoacetate, which is then methylated by GAMT to form creatine. Provides creatine as a source for ATP generation in tissues with high energy demands, in particular skeletal muscle, heart and brain. This chain is Glycine amidinotransferase, mitochondrial (Gatm), found in Mus musculus (Mouse).